Here is a 321-residue protein sequence, read N- to C-terminus: Cytochrome c biogenesis protein CcsA (321 aa).

Helical transmembrane passes span 9-29, 44-64, 68-88, 143-163, 226-246, 260-274, and 289-309; these read ILTH…LITL, GMIA…ASSG, LSNL…LHMI, MLLS…LLMI, VISL…VWAN, TWAF…IYLH, and VASI…LLGI.

The protein belongs to the CcmF/CycK/Ccl1/NrfE/CcsA family. In terms of assembly, may interact with Ccs1.

Its subcellular location is the plastid. It localises to the chloroplast thylakoid membrane. Functionally, required during biogenesis of c-type cytochromes (cytochrome c6 and cytochrome f) at the step of heme attachment. The sequence is that of Cytochrome c biogenesis protein CcsA from Oryza sativa (Rice).